A 376-amino-acid chain; its full sequence is Galactoside alpha-(1,2)-fucosyltransferase 1 (376 aa).

Residues 1-12 lie on the Cytoplasmic side of the membrane; that stretch reads MWTPSRKQLCLA. A helical; Signal-anchor for type II membrane protein membrane pass occupies residues 13-29; that stretch reads FLSVCVLSAGSFFFHLN. At 30–376 the chain is on the lumenal side; the sequence is GGNFFQNALT…WETDSLFRLA (347 aa). Asparagine 64, asparagine 302, and asparagine 328 each carry an N-linked (GlcNAc...) asparagine glycan.

This sequence belongs to the glycosyltransferase 11 family.

It is found in the golgi apparatus. The protein resides in the golgi stack membrane. The catalysed reaction is a beta-D-galactosyl-(1-&gt;4)-N-acetyl-beta-D-glucosaminyl derivative + GDP-beta-L-fucose = an alpha-L-Fuc-(1-&gt;2)-beta-D-Gal-(1-&gt;4)-beta-D-GlcNAc derivative + GDP + H(+). The enzyme catalyses a ganglioside GA1 + GDP-beta-L-fucose = a ganglioside Fuc-GA1 + GDP + H(+). It catalyses the reaction a beta-D-Gal-(1-&gt;3)-beta-D-GlcNAc-(1-&gt;3)-beta-D-Gal-(1-&gt;4)-beta-D-Glc-(1&lt;-&gt;1')-Cer(d18:1(4E)) + GDP-beta-L-fucose = alpha-L-fucosyl-(1-&gt;2)- beta-D-galactosyl-(1-&gt;3)-N-acetyl-beta-D-glucosaminyl-(1-&gt;3)-beta-D-galactosyl-(1-&gt;4)-beta-D-glucosyl-(1&lt;-&gt;1')-N-acylsphing-4-enine + GDP + H(+). It carries out the reaction a neolactoside nLc4Cer(d18:1(4E)) + GDP-beta-L-fucose = a neolactoside IV(2)-alpha-Fuc-nLc4Cer(d18:1(4E)) + GDP + H(+). The catalysed reaction is a ganglioside GM1 + GDP-beta-L-fucose = a ganglioside Fuc-GM1 + GDP + H(+). The enzyme catalyses beta-D-galactosyl-(1-&gt;3)-N-acetyl-D-galactosamine + GDP-beta-L-fucose = alpha-L-fucosyl-(1-&gt;2)-beta-D-galactosyl-(1-&gt;3)-N-acetyl-D-galactosamine + GDP + H(+). The protein operates within protein modification; protein glycosylation. Its function is as follows. Catalyzes the transfer of L-fucose, from a guanosine diphosphate-beta-L-fucose, to the terminal galactose residue of glycoconjugates through an alpha(1,2) linkage leading to H antigen synthesis that is an intermediate substrate in the synthesis of ABO blood group antigens. H antigen is essential for maturation of the glomerular layer of the main olfactory bulb, in cell migration and early cell-cell contacts during tumor associated angiogenesis. Preferentially fucosylates soluble lactose and to a lesser extent fucosylates glycolipids gangliosides GA1 and GM1a. The sequence is that of Galactoside alpha-(1,2)-fucosyltransferase 1 from Rattus norvegicus (Rat).